The sequence spans 77 residues: Defensin-B6 (77 aa).

The first 20 residues, 1 to 20 (MKTLFFLSVFIFLLLHLSPG), serve as a signal peptide directing secretion. Cystine bridges form between cysteine 43/cysteine 70, cysteine 50/cysteine 64, and cysteine 54/cysteine 71.

Belongs to the beta-defensin family. As to expression, lowly expressed in spleen, kidney and lung.

It localises to the secreted. In terms of biological role, has antimicrobial activity. This is Defensin-B6 from Ornithorhynchus anatinus (Duckbill platypus).